Reading from the N-terminus, the 554-residue chain is Hydroxylamine reductase (554 aa).

The [2Fe-2S] cluster site is built by C3, C6, C18, and C25. Positions 252, 276, 320, 408, 436, 461, 495, and 497 each coordinate hybrid [4Fe-2O-2S] cluster. The residue at position 408 (C408) is a Cysteine persulfide.

This sequence belongs to the HCP family. [2Fe-2S] cluster is required as a cofactor. Requires hybrid [4Fe-2O-2S] cluster as cofactor.

It localises to the cytoplasm. It carries out the reaction A + NH4(+) + H2O = hydroxylamine + AH2 + H(+). Its function is as follows. Catalyzes the reduction of hydroxylamine to form NH(3) and H(2)O. This Shewanella pealeana (strain ATCC 700345 / ANG-SQ1) protein is Hydroxylamine reductase.